The following is a 217-amino-acid chain: Adenylate kinase (217 aa).

10–15 serves as a coordination point for ATP; the sequence is GAGKGT. The segment at 30 to 59 is NMP; sequence STGDMLRAQVKAGTALGLEAKKHMDAGGLV. Residues Thr-31, Arg-36, 57 to 59, 85 to 88, and Gln-92 each bind AMP; these read GLV and GFPR. Residues 122–159 are LID; it reads GRRAHLASGRTYHVKFNPPKVEGIDDVTGEPLVQRDDD. ATP contacts are provided by residues Arg-123 and 132–133; that span reads TY. Residues Arg-156 and Arg-167 each coordinate AMP. Residue Gly-203 coordinates ATP.

The protein belongs to the adenylate kinase family. As to quaternary structure, monomer.

It localises to the cytoplasm. The enzyme catalyses AMP + ATP = 2 ADP. It functions in the pathway purine metabolism; AMP biosynthesis via salvage pathway; AMP from ADP: step 1/1. Its function is as follows. Catalyzes the reversible transfer of the terminal phosphate group between ATP and AMP. Plays an important role in cellular energy homeostasis and in adenine nucleotide metabolism. The chain is Adenylate kinase from Dechloromonas aromatica (strain RCB).